Here is a 100-residue protein sequence, read N- to C-terminus: Large ribosomal subunit protein eL36A (100 aa).

Threonine 2 carries the N-acetylthreonine modification.

This sequence belongs to the eukaryotic ribosomal protein eL36 family. As to quaternary structure, component of the large ribosomal subunit (LSU). Mature yeast ribosomes consist of a small (40S) and a large (60S) subunit. The 40S small subunit contains 1 molecule of ribosomal RNA (18S rRNA) and 33 different proteins (encoded by 57 genes). The large 60S subunit contains 3 rRNA molecules (25S, 5.8S and 5S rRNA) and 46 different proteins (encoded by 81 genes). N-terminally acetylated by acetyltransferase NatA.

Its subcellular location is the cytoplasm. Functionally, component of the ribosome, a large ribonucleoprotein complex responsible for the synthesis of proteins in the cell. The small ribosomal subunit (SSU) binds messenger RNAs (mRNAs) and translates the encoded message by selecting cognate aminoacyl-transfer RNA (tRNA) molecules. The large subunit (LSU) contains the ribosomal catalytic site termed the peptidyl transferase center (PTC), which catalyzes the formation of peptide bonds, thereby polymerizing the amino acids delivered by tRNAs into a polypeptide chain. The nascent polypeptides leave the ribosome through a tunnel in the LSU and interact with protein factors that function in enzymatic processing, targeting, and the membrane insertion of nascent chains at the exit of the ribosomal tunnel. This is Large ribosomal subunit protein eL36A from Saccharomyces cerevisiae (strain ATCC 204508 / S288c) (Baker's yeast).